The following is an 882-amino-acid chain: MPALACLRRLCRHVSPQAVLFLLFIFCLFSVFISAYYLYGWKRGLEPSADAPEPDCGDPPPVAPSRLLPLKPVQAATPSRTDPLVLVFVESLYSQLGQEVVAILESSRFKYRTEIAPGKGDMPTLTDKGRGRFALIIYENILKYVNLDAWNRELLDKYCVAYGVGIIGFFKANENSLLSAQLKGFPLFLHSNLGLKDCSINPKSPLLYVTRPSEVEKGVLPGEDWTVFQSNHSTYEPVLLAKTRSSESIPHLGADAGLHAALHATVVQDLGLHDGIQRVLFGNNLNFWLHKLVFVDAVAFLTGKRLSLPLDRYILVDIDDIFVGKEGTRMKVEDVKALFDTQNELRAHIPNFTFNLGYSGKFFHTGTNAEDAGDDLLLSYVKEFWWFPHMWSHMQPHLFHNQSVLAEQMALNKKFAVEHGIPTDMGYAVAPHHSGVYPVHVQLYEAWKQVWSIRVTSTEEYPHLKPARYRRGFIHNGIMVLPRQTCGLFTHTIFYNEYPGGSSELDKIINGGELFLTVLLNPISIFMTHLSNYGNDRLGLYTFKHLVRFLHSWTNLRLQTLPPVQLAQKYFQIFSEEKDPLWQDPCEDKRHKDIWSKEKTCDRFPKLLIIGPQKTGTTALYLFLGMHPDLSSNYPSSETFEEIQFFNGHNYHKGIDWYMEFFPIPSNTTSDFYFEKSANYFDSEVAPRRAAALLPKAKVLTILINPADRAYSWYQHQRAHDDPVALKYTFHEVITAGSDASSKLRALQNRCLVPGWYATHIERWLSAYHANQILVLDGKLLRTEPAKVMDMVQKFLGVTNTIDYHKTLAFDPKKGFWCQLLEGGKTKCLGKSKGRKYPEMDLDSRAFLKDYYRDHNIELSKLLYKMGQTLPTWLREDLQNTR.

At 1-17 (MPALACLRRLCRHVSPQ) the chain is on the cytoplasmic side. Residues 1 to 169 (MPALACLRRL…VAYGVGIIGF (169 aa)) form a sufficient for localization to Golgi membrane region. The chain crosses the membrane as a helical; Signal-anchor for type II membrane protein span at residues 18–39 (AVLFLLFIFCLFSVFISAYYLY). The tract at residues 40 to 598 (GWKRGLEPSA…KRHKDIWSKE (559 aa)) is heparan sulfate N-deacetylase 1. Residues 40-882 (GWKRGLEPSA…WLREDLQNTR (843 aa)) are Lumenal-facing. Asn231, Asn351, and Asn401 each carry an N-linked (GlcNAc...) asparagine glycan. The heparan sulfate N-sulfotransferase 1 stretch occupies residues 599–882 (KTCDRFPKLL…WLREDLQNTR (284 aa)). Lys614 (for sulfotransferase activity) is an active-site residue. Residue 614-618 (KTGTT) participates in adenosine 3',5'-bisphosphate binding. Asn667 is a glycosylation site (N-linked (GlcNAc...) asparagine). Ser712 and Trp817 together coordinate adenosine 3',5'-bisphosphate. Cys818 and Cys828 are joined by a disulfide. 833 to 837 (KGRKY) serves as a coordination point for adenosine 3',5'-bisphosphate.

This sequence belongs to the sulfotransferase 1 family. NDST subfamily. Monomer. In terms of assembly, interacts with heparan sulfate co-polymerase subunits EXT1 and EXT2. Interacts with NDST1 isoform 3. As to quaternary structure, interacts with heparan sulfate co-polymerase subunits EXT1 and EXT2. Interacts with NDST1 isoform 1. Widely expressed. Expression is most abundant in heart, liver and pancreas.

The protein resides in the golgi apparatus. It is found in the trans-Golgi network membrane. It localises to the cis-Golgi network membrane. It carries out the reaction N-acetyl-alpha-D-glucosaminyl-[heparan sulfate](n) + H2O = alpha-D-glucosaminyl-[heparan sulfate](n) + acetate. The catalysed reaction is alpha-D-glucosaminyl-[heparan sulfate](n) + 3'-phosphoadenylyl sulfate = N-sulfo-alpha-D-glucosaminyl-[heparan sulfate](n) + adenosine 3',5'-bisphosphate + 2 H(+). The protein operates within glycan metabolism; heparan sulfate biosynthesis. Its pathway is glycan metabolism; heparin biosynthesis. Functionally, essential bifunctional enzyme that catalyzes both the N-deacetylation and the N-sulfation of glucosamine (GlcNAc) of the glycosaminoglycan in heparan sulfate. Modifies the GlcNAc-GlcA disaccharide repeating sugar backbone to make N-sulfated heparosan, a prerequisite substrate for later modifications in heparin biosynthesis. Plays a role in determining the extent and pattern of sulfation of heparan sulfate. Participates in biosynthesis of heparan sulfate that can ultimately serve as L-selectin ligands, thereby playing a role in inflammatory response. Required for the exosomal release of SDCBP, CD63 and syndecan. In terms of biological role, lacks both N-deacetylase and N-sulfotransferase activities. Acts as a dominant negative on isoform 1, likely by changing the composition of enzyme complexes responsible for elongation and modification of heparan sulfates. The chain is Bifunctional heparan sulfate N-deacetylase/N-sulfotransferase 1 from Homo sapiens (Human).